We begin with the raw amino-acid sequence, 94 residues long: MSEEKPKEGVKTENDHINLKVAGQDGSVVQFKIKRHTPLSKLMKAYCERQGLSMRQIRFRFDGQPINEADTPAQLEMEDEDTIDVFQQQTGGLC.

Lys-11 participates in a covalent cross-link: Glycyl lysine isopeptide (Lys-Gly) (interchain with G-Cter in SUMO). The 78-residue stretch at 15-92 (DHINLKVAGQ…IDVFQQQTGG (78 aa)) folds into the Ubiquitin-like domain. Residue Gly-92 forms a Glycyl lysine isopeptide (Gly-Lys) (interchain with K-? in acceptor proteins) linkage. A propeptide spanning residues 93–94 (LC) is cleaved from the precursor.

This sequence belongs to the ubiquitin family. SUMO subfamily. Interacts with SAE2 and UBE2I. Covalently attached to a number of proteins. Post-translationally, polymeric chains can be formed through Lys-11 cross-linking. In terms of processing, cleavage of precursor form by a sentrin-specific protease is necessary for function.

It is found in the cytoplasm. The protein resides in the nucleus. Its subcellular location is the PML body. In terms of biological role, ubiquitin-like protein which can be covalently attached to target lysines either as a monomer or as a lysine-linked polymer. Does not seem to be involved in protein degradation and may function as an antagonist of ubiquitin in the degradation process. Plays a role in a number of cellular processes such as nuclear transport, DNA replication and repair, mitosis and signal transduction. Covalent attachment to its substrates requires prior activation by the E1 complex SAE1-SAE2 and linkage to the E2 enzyme UBE2I. The chain is Small ubiquitin-related modifier 3 from Gallus gallus (Chicken).